A 232-amino-acid polypeptide reads, in one-letter code: 5'-methylthioadenosine/S-adenosylhomocysteine nucleosidase (232 aa).

Glutamate 12 acts as the Proton acceptor in catalysis. Residues glycine 78, isoleucine 152, and 173-174 (ME) contribute to the substrate site. Aspartate 197 acts as the Proton donor in catalysis.

The protein belongs to the PNP/UDP phosphorylase family. MtnN subfamily. As to quaternary structure, homodimer.

The catalysed reaction is S-adenosyl-L-homocysteine + H2O = S-(5-deoxy-D-ribos-5-yl)-L-homocysteine + adenine. It carries out the reaction S-methyl-5'-thioadenosine + H2O = 5-(methylsulfanyl)-D-ribose + adenine. The enzyme catalyses 5'-deoxyadenosine + H2O = 5-deoxy-D-ribose + adenine. It participates in amino-acid biosynthesis; L-methionine biosynthesis via salvage pathway; S-methyl-5-thio-alpha-D-ribose 1-phosphate from S-methyl-5'-thioadenosine (hydrolase route): step 1/2. Its function is as follows. Catalyzes the irreversible cleavage of the glycosidic bond in both 5'-methylthioadenosine (MTA) and S-adenosylhomocysteine (SAH/AdoHcy) to adenine and the corresponding thioribose, 5'-methylthioribose and S-ribosylhomocysteine, respectively. Also cleaves 5'-deoxyadenosine, a toxic by-product of radical S-adenosylmethionine (SAM) enzymes, into 5-deoxyribose and adenine. Thus, is required for in vivo function of the radical SAM enzymes biotin synthase and lipoic acid synthase, that are inhibited by 5'-deoxyadenosine accumulation. The polypeptide is 5'-methylthioadenosine/S-adenosylhomocysteine nucleosidase (Salmonella paratyphi B (strain ATCC BAA-1250 / SPB7)).